The sequence spans 521 residues: Peroxisomal membrane protein PEX23 (521 aa).

Residues 1–26 (MPTDPNSNPVSKAGLTPSSINSNISE) are disordered. 2 N-linked (GlcNAc...) asparagine glycosylation sites follow: asparagine 23 and asparagine 53. The next 2 helical transmembrane spans lie at 111 to 128 (SYIS…ILYF) and 133 to 150 (IYLG…YSIF). Asparagine 189 carries N-linked (GlcNAc...) asparagine glycosylation. A helical membrane pass occupies residues 198–217 (LLFTSIFLSPGYILVCYLLF). An N-linked (GlcNAc...) asparagine glycan is attached at asparagine 279. The tract at residues 425–446 (VSPGDDSSTDSASLPHSASETV) is disordered. Residues 429-446 (DDSSTDSASLPHSASETV) are compositionally biased toward polar residues. N-linked (GlcNAc...) asparagine glycosylation is found at asparagine 463 and asparagine 467. The tract at residues 465 to 486 (SGNITTSAETAPDSAGTAKKRK) is disordered.

Belongs to the PEX28-32 family. PEX32 subfamily.

The protein localises to the endoplasmic reticulum membrane. In terms of biological role, with PEX29, contributes to the formation of endoplasmic reticulum-mitochondria junctions which are important for mitochondrial function. Involved in lipid dropplets formation. The chain is Peroxisomal membrane protein PEX23 from Ogataea parapolymorpha (strain ATCC 26012 / BCRC 20466 / JCM 22074 / NRRL Y-7560 / DL-1) (Yeast).